The primary structure comprises 426 residues: tRNA modification GTPase MnmE (426 aa).

3 residues coordinate (6S)-5-formyl-5,6,7,8-tetrahydrofolate: Arg-20, Glu-77, and Met-117. Positions Gly-213–Ser-350 constitute a TrmE-type G domain. Asn-223 serves as a coordination point for K(+). Residues Asn-223–Thr-228, Ser-242–Thr-248, and Asp-267–Gly-270 contribute to the GTP site. A Mg(2+)-binding site is contributed by Ser-227. 3 residues coordinate K(+): Ser-242, Val-244, and Thr-247. Thr-248 provides a ligand contact to Mg(2+). Position 426 (Lys-426) interacts with (6S)-5-formyl-5,6,7,8-tetrahydrofolate.

The protein belongs to the TRAFAC class TrmE-Era-EngA-EngB-Septin-like GTPase superfamily. TrmE GTPase family. Homodimer. Heterotetramer of two MnmE and two MnmG subunits. Requires K(+) as cofactor.

It is found in the cytoplasm. In terms of biological role, exhibits a very high intrinsic GTPase hydrolysis rate. Involved in the addition of a carboxymethylaminomethyl (cmnm) group at the wobble position (U34) of certain tRNAs, forming tRNA-cmnm(5)s(2)U34. The polypeptide is tRNA modification GTPase MnmE (Jannaschia sp. (strain CCS1)).